Consider the following 271-residue polypeptide: Aliphatic sulfonates import ATP-binding protein SsuB (271 aa).

In terms of domain architecture, ABC transporter spans 13-234 (ITLESIGKRY…RKGSAKLAAL (222 aa)). 45–52 (GRSGCGKS) is a binding site for ATP. Residues 250-271 (EASRQGIKASRQGTATSRRVAN) are disordered. The segment covering 260–271 (RQGTATSRRVAN) has biased composition (polar residues).

The protein belongs to the ABC transporter superfamily. Aliphatic sulfonates importer (TC 3.A.1.17.2) family. In terms of assembly, the complex is composed of two ATP-binding proteins (SsuB), two transmembrane proteins (SsuC) and a solute-binding protein (SsuA).

The protein resides in the cell inner membrane. It catalyses the reaction ATP + H2O + aliphatic sulfonate-[sulfonate-binding protein]Side 1 = ADP + phosphate + aliphatic sulfonateSide 2 + [sulfonate-binding protein]Side 1.. Functionally, part of the ABC transporter complex SsuABC involved in aliphatic sulfonates import. Responsible for energy coupling to the transport system. This is Aliphatic sulfonates import ATP-binding protein SsuB from Yersinia pestis bv. Antiqua (strain Antiqua).